Reading from the N-terminus, the 340-residue chain is Ketol-acid reductoisomerase (NADP(+)) (340 aa).

In terms of domain architecture, KARI N-terminal Rossmann spans 2–181; sequence AKVFYNGDIN…GSARAGVIET (180 aa). Residues 25–28, Arg-48, Ser-52, and 82–85 each bind NADP(+); these read YGSQ and DEHQ. The active site involves His-107. Gly-133 contacts NADP(+). The KARI C-terminal knotted domain maps to 182–327; that stretch reads TFQEETETDL…RELREMMPFV (146 aa). Mg(2+) contacts are provided by Asp-190, Glu-194, Glu-226, and Glu-230. Ser-251 provides a ligand contact to substrate.

This sequence belongs to the ketol-acid reductoisomerase family. Requires Mg(2+) as cofactor.

It carries out the reaction (2R)-2,3-dihydroxy-3-methylbutanoate + NADP(+) = (2S)-2-acetolactate + NADPH + H(+). The enzyme catalyses (2R,3R)-2,3-dihydroxy-3-methylpentanoate + NADP(+) = (S)-2-ethyl-2-hydroxy-3-oxobutanoate + NADPH + H(+). The protein operates within amino-acid biosynthesis; L-isoleucine biosynthesis; L-isoleucine from 2-oxobutanoate: step 2/4. Its pathway is amino-acid biosynthesis; L-valine biosynthesis; L-valine from pyruvate: step 2/4. In terms of biological role, involved in the biosynthesis of branched-chain amino acids (BCAA). Catalyzes an alkyl-migration followed by a ketol-acid reduction of (S)-2-acetolactate (S2AL) to yield (R)-2,3-dihydroxy-isovalerate. In the isomerase reaction, S2AL is rearranged via a Mg-dependent methyl migration to produce 3-hydroxy-3-methyl-2-ketobutyrate (HMKB). In the reductase reaction, this 2-ketoacid undergoes a metal-dependent reduction by NADPH to yield (R)-2,3-dihydroxy-isovalerate. In Halalkalibacterium halodurans (strain ATCC BAA-125 / DSM 18197 / FERM 7344 / JCM 9153 / C-125) (Bacillus halodurans), this protein is Ketol-acid reductoisomerase (NADP(+)).